A 484-amino-acid chain; its full sequence is Glutamate--tRNA ligase (484 aa).

Positions 9 to 19 (PSPTGNLHIGT) match the 'HIGH' region motif. Residues Cys-98, Cys-100, His-125, and His-127 each coordinate Zn(2+). The 'KMSKS' region motif lies at 250–254 (KLSKR). Lys-253 is a binding site for ATP.

Belongs to the class-I aminoacyl-tRNA synthetase family. Glutamate--tRNA ligase type 1 subfamily. In terms of assembly, monomer. Zn(2+) serves as cofactor.

The protein resides in the cytoplasm. It catalyses the reaction tRNA(Glu) + L-glutamate + ATP = L-glutamyl-tRNA(Glu) + AMP + diphosphate. Functionally, catalyzes the attachment of glutamate to tRNA(Glu) in a two-step reaction: glutamate is first activated by ATP to form Glu-AMP and then transferred to the acceptor end of tRNA(Glu). The chain is Glutamate--tRNA ligase from Crocosphaera subtropica (strain ATCC 51142 / BH68) (Cyanothece sp. (strain ATCC 51142)).